Reading from the N-terminus, the 72-residue chain is Long neurotoxin 1 (72 aa).

5 disulfide bridges follow: Cys-3-Cys-21, Cys-14-Cys-42, Cys-27-Cys-31, Cys-46-Cys-57, and Cys-58-Cys-63.

Belongs to the three-finger toxin family. Long-chain subfamily. Type II alpha-neurotoxin sub-subfamily. In terms of tissue distribution, expressed by the venom gland.

The protein resides in the secreted. Its function is as follows. Binds with high affinity to muscular (alpha-1/CHRNA1) and neuronal (alpha-7/CHRNA7) nicotinic acetylcholine receptor (nAChR) and inhibits acetylcholine from binding to the receptor, thereby impairing neuromuscular and neuronal transmission. The polypeptide is Long neurotoxin 1 (Naja anchietae (Anchieta's cobra)).